A 243-amino-acid polypeptide reads, in one-letter code: Protein HUA2 (243 aa).

Its subcellular location is the cytoplasm. In terms of biological role, may have a role in actin patch assembly. The sequence is that of Protein HUA2 (HUA2) from Saccharomyces cerevisiae (strain ATCC 204508 / S288c) (Baker's yeast).